The following is a 361-amino-acid chain: Histidinol-phosphate aminotransferase (361 aa).

An N6-(pyridoxal phosphate)lysine modification is found at Lys224.

Belongs to the class-II pyridoxal-phosphate-dependent aminotransferase family. Histidinol-phosphate aminotransferase subfamily. As to quaternary structure, homodimer. Pyridoxal 5'-phosphate is required as a cofactor.

It catalyses the reaction L-histidinol phosphate + 2-oxoglutarate = 3-(imidazol-4-yl)-2-oxopropyl phosphate + L-glutamate. It participates in amino-acid biosynthesis; L-histidine biosynthesis; L-histidine from 5-phospho-alpha-D-ribose 1-diphosphate: step 7/9. In Limosilactobacillus fermentum (strain NBRC 3956 / LMG 18251) (Lactobacillus fermentum), this protein is Histidinol-phosphate aminotransferase.